The primary structure comprises 409 residues: Aquaporin-10 (409 aa).

Disordered regions lie at residues 1-24 (MADA…TTMP) and 47-74 (ADVN…RPLV). Residues 12 to 22 (TTGTATTAPTT) are compositionally biased toward low complexity. The next 2 membrane-spanning stretches (helical) occupy residues 110–130 (FLGS…VVLS) and 138–158 (LSIN…AGGI). Positions 164–166 (NPA) match the NPA 1 motif. A helical membrane pass occupies residues 184–204 (VYMFAQYAGCICASAIVHAIY). A glycan (N-linked (GlcNAc...) asparagine) is linked at Asn-215. 2 helical membrane-spanning segments follow: residues 241–261 (TGLA…LALT) and 270–290 (GGVV…AYGF). Residues 297-299 (NPA) carry the NPA 2 motif. The chain crosses the membrane as a helical span at residues 339–359 (IPVVGPHLGALLGAAIYFFFI).

This sequence belongs to the MIP/aquaporin (TC 1.A.8) family.

The protein localises to the cell membrane. Its function is as follows. Aquaglyceroporin that may modulate the water content and osmolytes during anhydrobiosis. The chain is Aquaporin-10 from Milnesium tardigradum (Water bear).